Here is a 351-residue protein sequence, read N- to C-terminus: Dihydroorotate dehydrogenase (quinone) (351 aa).

Residues Ala-61–Lys-65 and Thr-85 contribute to the FMN site. Lys-65 is a substrate binding site. Residue Asn-110–Phe-114 participates in substrate binding. The FMN site is built by Asn-139 and Asn-172. Asn-172 is a binding site for substrate. Ser-175 functions as the Nucleophile in the catalytic mechanism. Asn-177 contributes to the substrate binding site. The FMN site is built by Lys-217 and Thr-245. Substrate is bound at residue Asn-246–Thr-247. FMN-binding positions include Gly-268, Gly-297, and Tyr-318–Ser-319.

Belongs to the dihydroorotate dehydrogenase family. Type 2 subfamily. As to quaternary structure, monomer. It depends on FMN as a cofactor.

Its subcellular location is the cell membrane. The catalysed reaction is (S)-dihydroorotate + a quinone = orotate + a quinol. The protein operates within pyrimidine metabolism; UMP biosynthesis via de novo pathway; orotate from (S)-dihydroorotate (quinone route): step 1/1. Its function is as follows. Catalyzes the conversion of dihydroorotate to orotate with quinone as electron acceptor. In Stenotrophomonas maltophilia (strain R551-3), this protein is Dihydroorotate dehydrogenase (quinone).